The following is an 834-amino-acid chain: Periplasmic nitrate reductase (834 aa).

The segment at residues 1–29 is a signal peptide (tat-type signal); sequence MNLTRREFAKANAAAIAAAAAGLPILVRA. Positions 41-97 constitute a 4Fe-4S Mo/W bis-MGD-type domain; it reads LVWNKAPCRFCGTGCSVMVATRDGQVVATHGDIKAEVNRGINCVKGYFLSKIMYGSD. Residues cysteine 48, cysteine 51, cysteine 55, and cysteine 83 each coordinate [4Fe-4S] cluster. Mo-bis(molybdopterin guanine dinucleotide) contacts are provided by residues lysine 85, glutamine 152, asparagine 177, cysteine 181, 214 to 221, 245 to 249, 264 to 266, methionine 375, glutamine 379, asparagine 485, 511 to 512, lysine 534, aspartate 561, and 721 to 730; these read WGSNMAEM, STFEH, QTD, SD, and TGRVLEHWHT. Phenylalanine 797 is a substrate binding site. 2 residues coordinate Mo-bis(molybdopterin guanine dinucleotide): asparagine 805 and lysine 822.

Belongs to the prokaryotic molybdopterin-containing oxidoreductase family. NasA/NapA/NarB subfamily. Component of the periplasmic nitrate reductase NapAB complex composed of NapA and NapB. Requires [4Fe-4S] cluster as cofactor. The cofactor is Mo-bis(molybdopterin guanine dinucleotide). Predicted to be exported by the Tat system. The position of the signal peptide cleavage has not been experimentally proven.

It is found in the periplasm. It carries out the reaction 2 Fe(II)-[cytochrome] + nitrate + 2 H(+) = 2 Fe(III)-[cytochrome] + nitrite + H2O. In terms of biological role, catalytic subunit of the periplasmic nitrate reductase complex NapAB. Receives electrons from NapB and catalyzes the reduction of nitrate to nitrite. In Pseudomonas aeruginosa (strain LESB58), this protein is Periplasmic nitrate reductase.